The sequence spans 102 residues: UPF0251 protein ASA_1331 (102 aa).

This sequence belongs to the UPF0251 family.

The polypeptide is UPF0251 protein ASA_1331 (Aeromonas salmonicida (strain A449)).